The primary structure comprises 202 residues: Endothelin-1 (202 aa).

The first 25 residues, 1-25 (MDYLPVLFSLLLVVFQGAPEAAVLG), serve as a signal peptide directing secretion. Residues 26 to 50 (AELSTGPDSGGEKPAPSAPWRPRRS) constitute a propeptide that is removed on maturation. Positions 28–48 (LSTGPDSGGEKPAPSAPWRPR) are disordered. Disulfide bonds link cysteine 53–cysteine 67 and cysteine 55–cysteine 63. A propeptide spanning residues 74–202 (VNTPEHIVPY…EKKVTHNRTH (129 aa)) is cleaved from the precursor. An endothelin-like region spans residues 110-124 (CQCASQKDKKCWTFC).

It belongs to the endothelin/sarafotoxin family.

It is found in the secreted. Its function is as follows. Endothelins are endothelium-derived vasoconstrictor peptides. Probable ligand for G-protein coupled receptors EDNRA and EDNRB which activates PTK2B, BCAR1, BCAR3 and, GTPases RAP1 and RHOA cascade in glomerular mesangial cells. Also binds the DEAR/FBXW7-AS1 receptor. Promotes mesenteric arterial wall remodeling via activation of ROCK signaling and subsequent colocalization of NFATC3 with F-actin filaments. NFATC3 then translocates to the nucleus where it subsequently promotes the transcription of the smooth muscle hypertrophy and differentiation marker ACTA2. The sequence is that of Endothelin-1 (EDN1) from Felis catus (Cat).